The sequence spans 413 residues: Serine/threonine transporter SstT (413 aa).

A run of 10 helical transmembrane segments spans residues 18–38 (LSLVTQILIGLIAGIALALFA), 52–72 (FVSALKAVAPILVFVLVMASI), 86–106 (ILFLYLLGTFAAAVVAVIASM), 119–139 (IAVSAPGGISEVLQSLLLSVV), 145–165 (ALMNANFIGILAWAIGMGVAI), 196–216 (LGIFGLVASTLATSGFGALIG), 221–241 (LAVLLGCMLFVALVMNPLIVF), 292–312 (VSIPLGATINMAGAAITITVL), 320–340 (LGIAVDIPTAILLSVVAAICA), and 360–380 (LFGIPSEIAMQVVAVGFIIGV).

It belongs to the dicarboxylate/amino acid:cation symporter (DAACS) (TC 2.A.23) family.

It is found in the cell inner membrane. The catalysed reaction is L-serine(in) + Na(+)(in) = L-serine(out) + Na(+)(out). It catalyses the reaction L-threonine(in) + Na(+)(in) = L-threonine(out) + Na(+)(out). Involved in the import of serine and threonine into the cell, with the concomitant import of sodium (symport system). This chain is Serine/threonine transporter SstT, found in Pseudomonas fluorescens (strain Pf0-1).